The sequence spans 402 residues: Uroporphyrinogen decarboxylase 1, chloroplastic (402 aa).

The transit peptide at 1–50 (MISATATAAFLAAAPASSSSCTTHRRRSGLPAISASLATASSTEEPLLVR) directs the protein to the chloroplast. Substrate-binding positions include 67 to 71 (RQAGR), Phe86, Ser116, Asp117, Tyr193, Ser248, and His363.

It belongs to the uroporphyrinogen decarboxylase family. Homodimer.

The protein localises to the plastid. The protein resides in the chloroplast. It catalyses the reaction uroporphyrinogen III + 4 H(+) = coproporphyrinogen III + 4 CO2. Its pathway is porphyrin-containing compound metabolism; protoporphyrin-IX biosynthesis; coproporphyrinogen-III from 5-aminolevulinate: step 4/4. Catalyzes the decarboxylation of four acetate groups of uroporphyrinogen-III to yield coproporphyrinogen-III. This is Uroporphyrinogen decarboxylase 1, chloroplastic from Oryza sativa subsp. japonica (Rice).